The primary structure comprises 638 residues: 1-deoxy-D-xylulose-5-phosphate synthase (638 aa).

Thiamine diphosphate contacts are provided by residues His-72 and 113 to 115 (GHA). Asp-144 lines the Mg(2+) pocket. Residues 145–146 (GA), Asn-174, Tyr-289, and Glu-372 contribute to the thiamine diphosphate site. Residue Asn-174 coordinates Mg(2+).

This sequence belongs to the transketolase family. DXPS subfamily. In terms of assembly, homodimer. The cofactor is Mg(2+). Thiamine diphosphate serves as cofactor.

It carries out the reaction D-glyceraldehyde 3-phosphate + pyruvate + H(+) = 1-deoxy-D-xylulose 5-phosphate + CO2. Its pathway is metabolic intermediate biosynthesis; 1-deoxy-D-xylulose 5-phosphate biosynthesis; 1-deoxy-D-xylulose 5-phosphate from D-glyceraldehyde 3-phosphate and pyruvate: step 1/1. Functionally, catalyzes the acyloin condensation reaction between C atoms 2 and 3 of pyruvate and glyceraldehyde 3-phosphate to yield 1-deoxy-D-xylulose-5-phosphate (DXP). This Gloeobacter violaceus (strain ATCC 29082 / PCC 7421) protein is 1-deoxy-D-xylulose-5-phosphate synthase.